Reading from the N-terminus, the 1110-residue chain is RNA2 polyprotein (1110 aa).

The protein belongs to the nepoviruses RNA2 polyprotein family. Post-translationally, specific enzymatic cleavages in vivo by the P1 encoded 3C-like protease yield mature proteins.

The protein resides in the host cell junction. It localises to the host plasmodesma. It is found in the host cytoplasm. Its subcellular location is the host nucleus. The protein localises to the virion. Functionally, implicated in RNA2 replication. Could also be required for nematode transmission of the virus. Its function is as follows. Transports viral genome to neighboring plant cells directly through plasmosdesmata, without any budding. The movement protein allows efficient cell to cell propagation, by bypassing the host cell wall barrier. Acts by forming a tubular structure at the host plasmodesmata, enlarging it enough to allow free passage of virion capsids. The chain is RNA2 polyprotein from Vitis vinifera (Grape).